Reading from the N-terminus, the 203-residue chain is Holliday junction branch migration complex subunit RuvA (203 aa).

Residues 1 to 64 (MIGRLRGIIL…EDAQLLYGFN (64 aa)) are domain I. The tract at residues 65–142 (NKQERTLFKE…KGLHGDLFTP (78 aa)) is domain II. Residues 143 to 154 (AADLVLTSPAGP) are flexible linker. The domain III stretch occupies residues 155-203 (TADDAEQEAVAALVALGYKPQEASRMVSKIARPDANSETLIREALRAAL).

This sequence belongs to the RuvA family. In terms of assembly, homotetramer. Forms an RuvA(8)-RuvB(12)-Holliday junction (HJ) complex. HJ DNA is sandwiched between 2 RuvA tetramers; dsDNA enters through RuvA and exits via RuvB. An RuvB hexamer assembles on each DNA strand where it exits the tetramer. Each RuvB hexamer is contacted by two RuvA subunits (via domain III) on 2 adjacent RuvB subunits; this complex drives branch migration. In the full resolvosome a probable DNA-RuvA(4)-RuvB(12)-RuvC(2) complex forms which resolves the HJ.

The protein localises to the cytoplasm. The RuvA-RuvB-RuvC complex processes Holliday junction (HJ) DNA during genetic recombination and DNA repair, while the RuvA-RuvB complex plays an important role in the rescue of blocked DNA replication forks via replication fork reversal (RFR). RuvA specifically binds to HJ cruciform DNA, conferring on it an open structure. The RuvB hexamer acts as an ATP-dependent pump, pulling dsDNA into and through the RuvAB complex. HJ branch migration allows RuvC to scan DNA until it finds its consensus sequence, where it cleaves and resolves the cruciform DNA. The chain is Holliday junction branch migration complex subunit RuvA from Klebsiella pneumoniae (strain 342).